A 192-amino-acid chain; its full sequence is ADP-ribosylation factor-like protein 14 (192 aa).

Gly-2 carries N-myristoyl glycine lipidation. Residues 20 to 27 (GLDSAGKS), 64 to 68 (DVGGQ), and 124 to 127 (NKQD) each bind GTP.

This sequence belongs to the small GTPase superfamily. Arf family. Interacts with ARL14EP.

The protein localises to the cytoplasmic vesicle. GTPase that recruits MYO1E to MHC class II-containing vesicles via the effector protein ARL14EP and hence controls the movement of these vesicles along the actin cytoskeleton in dendritic cells. The sequence is that of ADP-ribosylation factor-like protein 14 (Arl14) from Mus musculus (Mouse).